A 157-amino-acid polypeptide reads, in one-letter code: Class-10 pathogenesis-related protein 1 (157 aa).

The protein belongs to the BetVI family. As to expression, expressed in roots. Detected in nodules and leaves, but not in stems and flowers.

This is Class-10 pathogenesis-related protein 1 (PR10-1) from Medicago truncatula (Barrel medic).